The sequence spans 527 residues: Rhesus-like glycoprotein A (527 aa).

At Met-1–Pro-18 the chain is on the cytoplasmic side. A helical transmembrane segment spans residues Ile-19–Leu-39. Residues Thr-40–Tyr-70 lie on the Extracellular side of the membrane. Asn-47 carries an N-linked (GlcNAc...) asparagine glycan. The chain crosses the membrane as a helical span at residues Gly-71–Leu-91. At Arg-92–Leu-99 the chain is on the cytoplasmic side. A helical membrane pass occupies residues Gly-100–Phe-120. Residues Glu-121–Asp-141 are Extracellular-facing. A helical transmembrane segment spans residues Ser-142 to Gly-162. Topologically, residues Arg-163–Pro-166 are cytoplasmic. The chain crosses the membrane as a helical span at residues Leu-167–Gly-187. Residues Glu-188 to Asp-195 lie on the Extracellular side of the membrane. The chain crosses the membrane as a helical span at residues Val-196–Phe-216. Topologically, residues Leu-217–Asn-236 are cytoplasmic. The helical transmembrane segment at Phe-237–Ala-257 threads the bilayer. At Pro-258–Gln-263 the chain is on the extracellular side. Residues Phe-264 to Val-284 form a helical membrane-spanning segment. The Cytoplasmic portion of the chain corresponds to Ser-285–His-299. The helical transmembrane segment at Val-300–Ile-319 threads the bilayer. Residues Asn-320–Pro-321 are Extracellular-facing. The helical transmembrane segment at Gly-322–Ile-342 threads the bilayer. The Cytoplasmic portion of the chain corresponds to Thr-343–Gly-357. Residues Ile-358–Ile-378 form a helical membrane-spanning segment. The Extracellular segment spans residues Lys-379 to Asn-406. Residues Leu-407–Ile-427 traverse the membrane as a helical segment. Residues Leu-428–Ile-527 are Cytoplasmic-facing. Positions Ser-471–Ile-527 are disordered. Basic and acidic residues predominate over residues Gly-483 to Lys-495. Over residues Ser-514–Ile-527 the composition is skewed to acidic residues.

This sequence belongs to the ammonium transporter (TC 2.A.49) family. Rh subfamily. Interacts with ap1g1.

The protein localises to the contractile vacuole. It is found in the membrane. May be a carbon dioxide/bicarbonate transporter. This chain is Rhesus-like glycoprotein A (rhgA), found in Dictyostelium discoideum (Social amoeba).